Reading from the N-terminus, the 173-residue chain is Crossover junction endodeoxyribonuclease RuvC (173 aa).

Catalysis depends on residues Asp-8, Glu-67, and Asp-139. The Mg(2+) site is built by Asp-8, Glu-67, and Asp-139.

This sequence belongs to the RuvC family. Homodimer which binds Holliday junction (HJ) DNA. The HJ becomes 2-fold symmetrical on binding to RuvC with unstacked arms; it has a different conformation from HJ DNA in complex with RuvA. In the full resolvosome a probable DNA-RuvA(4)-RuvB(12)-RuvC(2) complex forms which resolves the HJ. It depends on Mg(2+) as a cofactor.

The protein resides in the cytoplasm. It carries out the reaction Endonucleolytic cleavage at a junction such as a reciprocal single-stranded crossover between two homologous DNA duplexes (Holliday junction).. The RuvA-RuvB-RuvC complex processes Holliday junction (HJ) DNA during genetic recombination and DNA repair. Endonuclease that resolves HJ intermediates. Cleaves cruciform DNA by making single-stranded nicks across the HJ at symmetrical positions within the homologous arms, yielding a 5'-phosphate and a 3'-hydroxyl group; requires a central core of homology in the junction. The consensus cleavage sequence is 5'-(A/T)TT(C/G)-3'. Cleavage occurs on the 3'-side of the TT dinucleotide at the point of strand exchange. HJ branch migration catalyzed by RuvA-RuvB allows RuvC to scan DNA until it finds its consensus sequence, where it cleaves and resolves the cruciform DNA. The polypeptide is Crossover junction endodeoxyribonuclease RuvC (Photobacterium profundum (strain SS9)).